The following is an 89-amino-acid chain: Small ribosomal subunit protein uS15 (89 aa).

Belongs to the universal ribosomal protein uS15 family. As to quaternary structure, part of the 30S ribosomal subunit. Forms a bridge to the 50S subunit in the 70S ribosome, contacting the 23S rRNA.

Functionally, one of the primary rRNA binding proteins, it binds directly to 16S rRNA where it helps nucleate assembly of the platform of the 30S subunit by binding and bridging several RNA helices of the 16S rRNA. In terms of biological role, forms an intersubunit bridge (bridge B4) with the 23S rRNA of the 50S subunit in the ribosome. The protein is Small ribosomal subunit protein uS15 of Rhizobium rhizogenes (strain K84 / ATCC BAA-868) (Agrobacterium radiobacter).